A 196-amino-acid polypeptide reads, in one-letter code: Probable signal peptidase I-1 (196 aa).

The Cytoplasmic portion of the chain corresponds to 1–16; the sequence is MQNSPIPSPWQFIKEN. The chain crosses the membrane as a helical span at residues 17–35; that stretch reads IPLLMVALVLALLLRFFVA. Residues 36-196 lie on the Periplasmic side of the membrane; that stretch reads EPRYIPSDSM…FVPARTIINT (161 aa). Residues Ser-44 and Lys-94 contribute to the active site.

The protein belongs to the peptidase S26 family.

It is found in the cell membrane. It catalyses the reaction Cleavage of hydrophobic, N-terminal signal or leader sequences from secreted and periplasmic proteins.. The polypeptide is Probable signal peptidase I-1 (lepB1) (Synechocystis sp. (strain ATCC 27184 / PCC 6803 / Kazusa)).